The following is a 169-amino-acid chain: Large ribosomal subunit protein uL15 (169 aa).

Basic and acidic residues predominate over residues 1–13 (MKLNEIRDNEGAT). Residues 1-40 (MKLNEIRDNEGATKNRMRVGRGIGSGKGKTGGRGVKGQKA) are disordered. Residues 21-35 (RGIGSGKGKTGGRGV) are compositionally biased toward gly residues.

It belongs to the universal ribosomal protein uL15 family. Part of the 50S ribosomal subunit.

Functionally, binds to the 23S rRNA. The sequence is that of Large ribosomal subunit protein uL15 from Methylorubrum populi (strain ATCC BAA-705 / NCIMB 13946 / BJ001) (Methylobacterium populi).